The following is a 310-amino-acid chain: Transcription factor LRL2 (310 aa).

Low complexity-rich tracts occupy residues 1 to 20 (MNSS…LQSP) and 104 to 126 (QTQT…QPQT). Disordered regions lie at residues 1-23 (MNSS…PATF) and 95-143 (FHLP…PHSI). The segment at 136–149 (QATDPHSIAERLRR) is basic motif; degenerate. A bHLH domain is found at 136–185 (QATDPHSIAERLRRERIAERMKSLQELVPNGNKTDKASMLDEIIDYVKFL). A helix-loop-helix motif region spans residues 150–185 (ERIAERMKSLQELVPNGNKTDKASMLDEIIDYVKFL). Residues 203–225 (ASSQISEDAGGSHENTSSSGEAK) form a disordered region.

Homodimer. As to expression, expressed constitutively in roots, leaves, stems, and flowers.

It localises to the nucleus. Functionally, transcription factor that regulates the development of root hairs. Transcription factor that regulates the development of sperm cells. The sequence is that of Transcription factor LRL2 from Arabidopsis thaliana (Mouse-ear cress).